The chain runs to 241 residues: Pyridoxine 5'-phosphate synthase (241 aa).

Asn7 contributes to the 3-amino-2-oxopropyl phosphate binding site. A 1-deoxy-D-xylulose 5-phosphate-binding site is contributed by 9–10; sequence DH. Residue Arg18 coordinates 3-amino-2-oxopropyl phosphate. The Proton acceptor role is filled by His43. Residues Arg45 and His50 each coordinate 1-deoxy-D-xylulose 5-phosphate. Glu70 (proton acceptor) is an active-site residue. Residue Thr100 coordinates 1-deoxy-D-xylulose 5-phosphate. His191 serves as the catalytic Proton donor. Residues Gly192 and 213 to 214 contribute to the 3-amino-2-oxopropyl phosphate site; that span reads GH.

Belongs to the PNP synthase family. Homooctamer; tetramer of dimers.

The protein resides in the cytoplasm. The enzyme catalyses 3-amino-2-oxopropyl phosphate + 1-deoxy-D-xylulose 5-phosphate = pyridoxine 5'-phosphate + phosphate + 2 H2O + H(+). It participates in cofactor biosynthesis; pyridoxine 5'-phosphate biosynthesis; pyridoxine 5'-phosphate from D-erythrose 4-phosphate: step 5/5. Its function is as follows. Catalyzes the complicated ring closure reaction between the two acyclic compounds 1-deoxy-D-xylulose-5-phosphate (DXP) and 3-amino-2-oxopropyl phosphate (1-amino-acetone-3-phosphate or AAP) to form pyridoxine 5'-phosphate (PNP) and inorganic phosphate. This is Pyridoxine 5'-phosphate synthase from Nitrosospira multiformis (strain ATCC 25196 / NCIMB 11849 / C 71).